The sequence spans 316 residues: Carbamate kinase-like protein YahI (316 aa).

The protein belongs to the carbamate kinase family.

This is Carbamate kinase-like protein YahI (yahI) from Escherichia coli (strain K12).